Consider the following 264-residue polypeptide: Thymidylate synthase (264 aa).

A dUMP-binding site is contributed by Arg-21. Position 51 (His-51) interacts with (6R)-5,10-methylene-5,6,7,8-tetrahydrofolate. DUMP is bound at residue 126–127 (RR). The Nucleophile role is filled by Cys-146. DUMP contacts are provided by residues 166–169 (RSCD), Asn-177, and 207–209 (HLY). A (6R)-5,10-methylene-5,6,7,8-tetrahydrofolate-binding site is contributed by Asp-169. Residue Ala-263 coordinates (6R)-5,10-methylene-5,6,7,8-tetrahydrofolate.

Belongs to the thymidylate synthase family. Bacterial-type ThyA subfamily. As to quaternary structure, homodimer.

Its subcellular location is the cytoplasm. It carries out the reaction dUMP + (6R)-5,10-methylene-5,6,7,8-tetrahydrofolate = 7,8-dihydrofolate + dTMP. It functions in the pathway pyrimidine metabolism; dTTP biosynthesis. Functionally, catalyzes the reductive methylation of 2'-deoxyuridine-5'-monophosphate (dUMP) to 2'-deoxythymidine-5'-monophosphate (dTMP) while utilizing 5,10-methylenetetrahydrofolate (mTHF) as the methyl donor and reductant in the reaction, yielding dihydrofolate (DHF) as a by-product. This enzymatic reaction provides an intracellular de novo source of dTMP, an essential precursor for DNA biosynthesis. In Aeromonas hydrophila subsp. hydrophila (strain ATCC 7966 / DSM 30187 / BCRC 13018 / CCUG 14551 / JCM 1027 / KCTC 2358 / NCIMB 9240 / NCTC 8049), this protein is Thymidylate synthase.